We begin with the raw amino-acid sequence, 65 residues long: Large ribosomal subunit protein bL35 (65 aa).

The protein belongs to the bacterial ribosomal protein bL35 family.

The polypeptide is Large ribosomal subunit protein bL35 (Polynucleobacter asymbioticus (strain DSM 18221 / CIP 109841 / QLW-P1DMWA-1) (Polynucleobacter necessarius subsp. asymbioticus)).